Consider the following 92-residue polypeptide: Small ribosomal subunit protein uS19 (92 aa).

It belongs to the universal ribosomal protein uS19 family.

Functionally, protein S19 forms a complex with S13 that binds strongly to the 16S ribosomal RNA. The chain is Small ribosomal subunit protein uS19 from Tolumonas auensis (strain DSM 9187 / NBRC 110442 / TA 4).